The primary structure comprises 508 residues: ATP synthase subunit alpha, chloroplastic (508 aa).

170 to 177 (GDRQTGKT) serves as a coordination point for ATP.

It belongs to the ATPase alpha/beta chains family. As to quaternary structure, F-type ATPases have 2 components, CF(1) - the catalytic core - and CF(0) - the membrane proton channel. CF(1) has five subunits: alpha(3), beta(3), gamma(1), delta(1), epsilon(1). CF(0) has four main subunits: a, b, b' and c.

It is found in the plastid. The protein localises to the chloroplast thylakoid membrane. The catalysed reaction is ATP + H2O + 4 H(+)(in) = ADP + phosphate + 5 H(+)(out). Produces ATP from ADP in the presence of a proton gradient across the membrane. The alpha chain is a regulatory subunit. The sequence is that of ATP synthase subunit alpha, chloroplastic from Helianthus annuus (Common sunflower).